Reading from the N-terminus, the 276-residue chain is Dermonecrotic toxin Ls4SicTox-alphaIII1i (276 aa).

His-3 is an active-site residue. Residues Glu-23 and Asp-25 each coordinate Mg(2+). His-38 functions as the Nucleophile in the catalytic mechanism. Cys-42 and Cys-48 are joined by a disulfide. Asp-82 is a binding site for Mg(2+).

This sequence belongs to the arthropod phospholipase D family. Class I subfamily. Mg(2+) serves as cofactor. As to expression, expressed by the venom gland.

The protein localises to the secreted. The catalysed reaction is an N-(acyl)-sphingosylphosphocholine = an N-(acyl)-sphingosyl-1,3-cyclic phosphate + choline. It catalyses the reaction an N-(acyl)-sphingosylphosphoethanolamine = an N-(acyl)-sphingosyl-1,3-cyclic phosphate + ethanolamine. It carries out the reaction a 1-acyl-sn-glycero-3-phosphocholine = a 1-acyl-sn-glycero-2,3-cyclic phosphate + choline. The enzyme catalyses a 1-acyl-sn-glycero-3-phosphoethanolamine = a 1-acyl-sn-glycero-2,3-cyclic phosphate + ethanolamine. Functionally, dermonecrotic toxins cleave the phosphodiester linkage between the phosphate and headgroup of certain phospholipids (sphingolipid and lysolipid substrates), forming an alcohol (often choline) and a cyclic phosphate. This toxin acts on sphingomyelin (SM). It may also act on ceramide phosphoethanolamine (CPE), lysophosphatidylcholine (LPC) and lysophosphatidylethanolamine (LPE), but not on lysophosphatidylserine (LPS), and lysophosphatidylglycerol (LPG). It acts by transphosphatidylation, releasing exclusively cyclic phosphate products as second products. Induces dermonecrosis, hemolysis, increased vascular permeability, edema, inflammatory response, and platelet aggregation. The polypeptide is Dermonecrotic toxin Ls4SicTox-alphaIII1i (Loxosceles sp. (strain 4 GJB-2008) (Recluse spider)).